Consider the following 237-residue polypeptide: MEIIPAIDLKDGRCVRLYQGDFQQVTVYGDDPVAIAQHWFEQGAPRLHLVDLDGARSGQPVHTDIIRAIVRSFGAPVQLGGGLRSIEAVERALELGVQRVVLGTAAVEHPDMIAHLVAQFGDAIAVAIDARNGMAATAGWTETAAMSAVDLLERMVTLGVRRVIYTDISRDGTLSEPNIAATGALVRPDGPAIIASGGISTLDHLRRLADVGVEGAIVGRALYTGDLSLREALAAFQ.

The active-site Proton acceptor is aspartate 8. The Proton donor role is filled by aspartate 129.

This sequence belongs to the HisA/HisF family.

It is found in the cytoplasm. The enzyme catalyses 1-(5-phospho-beta-D-ribosyl)-5-[(5-phospho-beta-D-ribosylamino)methylideneamino]imidazole-4-carboxamide = 5-[(5-phospho-1-deoxy-D-ribulos-1-ylimino)methylamino]-1-(5-phospho-beta-D-ribosyl)imidazole-4-carboxamide. The protein operates within amino-acid biosynthesis; L-histidine biosynthesis; L-histidine from 5-phospho-alpha-D-ribose 1-diphosphate: step 4/9. The sequence is that of 1-(5-phosphoribosyl)-5-[(5-phosphoribosylamino)methylideneamino] imidazole-4-carboxamide isomerase from Roseiflexus castenholzii (strain DSM 13941 / HLO8).